We begin with the raw amino-acid sequence, 483 residues long: HSPB1-associated protein 1 (483 aa).

The disordered stretch occupies residues 1 to 26 (MAAGCEGIAPPTLGERTVGEEGEPVK). The segment at 88 to 208 (ETECSYVDAT…EDTPFLYPTR (121 aa)) is interaction with HSPB1. A JmjC domain is found at 124–288 (WAYADYKYFV…HLARVEEAIT (165 aa)). The segment at 388–416 (LIPVTPASEERGGALEGDSEESVSSNGGH) is disordered.

Interacts with CRYAB and HSPB1.

It is found in the cytoplasm. Its function is as follows. May play a role in cellular stress response. In Mus musculus (Mouse), this protein is HSPB1-associated protein 1 (Hspbap1).